We begin with the raw amino-acid sequence, 326 residues long: Putative ubiquitin-conjugating enzyme E2 38 (326 aa).

One can recognise a UBC core domain in the interval 54–214 (NWVKKVQDEW…VFLLSLKTMV (161 aa)). The active-site Glycyl thioester intermediate is the C140. The interval 297 to 326 (LAEKPKPPVNNANTENQSKKKTRKRSRSSR) is disordered. Positions 315 to 326 (KKKTRKRSRSSR) are enriched in basic residues.

The protein belongs to the ubiquitin-conjugating enzyme family.

The enzyme catalyses S-ubiquitinyl-[E1 ubiquitin-activating enzyme]-L-cysteine + [E2 ubiquitin-conjugating enzyme]-L-cysteine = [E1 ubiquitin-activating enzyme]-L-cysteine + S-ubiquitinyl-[E2 ubiquitin-conjugating enzyme]-L-cysteine.. It functions in the pathway protein modification; protein ubiquitination. Functionally, accepts the ubiquitin from the E1 complex and catalyzes its covalent attachment to other proteins. This chain is Putative ubiquitin-conjugating enzyme E2 38 (UBC38), found in Arabidopsis thaliana (Mouse-ear cress).